The following is a 305-amino-acid chain: MEVAAATATSFTTLRARTSAIIPSSTRNLRSKPRFSSSSSLRASLSNGFLSPYTGGSISSDLCGAKLRAESLNPLNFSSSKPKRGVVTMVIPFSKGSAHEQPPPDLASYLFKNRIVYLGMSLVPSVTELILAEFLYLQYEDEEKPIYLYINSTGTTKNGEKLGYDTEAFAIYDVMGYVKPPIFTLCVGNAWGEAALLLTAGAKGNRSALPSSTIMIKQPIARFQGQATDVEIARKEIKHIKTEMVKLYSKHIGKSPEQIEADMKRPKYFSPTEAVEYGIIDKVVYNERGSQDRGVVSDLKKAQLI.

Residues 1–68 (MEVAAATATS…SSDLCGAKLR (68 aa)) constitute a chloroplast transit peptide.

Belongs to the peptidase S14 family. In terms of assembly, component of the chloroplastic Clp protease core complex which consist of at least 16 proteins: CLPP4 (3 copies), CLPP5 (3 copies), CLPR4 (2 copies), ClpP1 (1 copy), CLPP6 (1 copy), CLPR2 (1 copy), CLPT1 (1 copy), CLPT2 (1 copy) and 3 copies of CLPP3 and/or CLPR1 and/or CLPR3. The core complex is organized in two heptameric rings, one containing CLPP3,4,5,6 in a 1:2:3:1 ratio and the other CLPP1 and CLPR1,2,3,4 in a 3:1:1:1:1 ratio.

The protein resides in the plastid. It is found in the chloroplast. Its function is as follows. Involved in plastid protein homeostasis. In Arabidopsis thaliana (Mouse-ear cress), this protein is ATP-dependent Clp protease proteolytic subunit-related protein 4, chloroplastic.